We begin with the raw amino-acid sequence, 593 residues long: Methionine--tRNA ligase, mitochondrial (593 aa).

Residues 1-29 (MLRTSVLRLLGRTGASRLSLLEDFGPRYY) constitute a mitochondrion transit peptide. The 'HIGH' region signature appears at 52 to 62 (FYVNAAPHIGH). The short motif at 347 to 351 (KMSKS) is the 'KMSKS' region element. Residue K350 coordinates ATP.

It belongs to the class-I aminoacyl-tRNA synthetase family.

Its subcellular location is the mitochondrion matrix. It carries out the reaction tRNA(Met) + L-methionine + ATP = L-methionyl-tRNA(Met) + AMP + diphosphate. This chain is Methionine--tRNA ligase, mitochondrial (MARS2), found in Homo sapiens (Human).